The sequence spans 507 residues: MVTIRADEISNIIRERIEQYNREVTIVNTGTVLQVGDGIARIYGLDEVMAGELVEFEEGTIGIALNLESNNVGVVLMGDGLMIQEGSSVKATGKIAQIPVSEAYLGRVINALANPIDGRGKIAASESRLIESPAPGIISRRSVYEPLQTGLIAIDSMIPIGRGQRELIIGDRQTGKTAVATDTILNQQGQNVICVYVAIGQKASSVAQVVTSLQERGAMEYTIVVAETADSPATLQYLAPYTGAALAEYFMYREQHTLIIYDDLSKQAQAYRQMSLLLRRPPGREAYPGDVFYLHSRLLERAAKLSSQLGEGSMTALPIVETQAGDVSAYIPTNVISITDGQIFLSADLFNSGIRPAINVGISVSRVGSAAQIKAMKQVAGKLKLELAQFAELEAFAQFSSDLDKATQNQLARGQRLRELLKQSQSAPLTVEEQIMTIYTGTNGYLDGLEIGQVRKFLVQLRTYLKTNKPQFQEIISSTKTLTPEAESLLKEGIQEQLERFLLQEKV.

An ATP-binding site is contributed by 170–177 (GDRQTGKT). Residue T257 is modified to Phosphothreonine.

It belongs to the ATPase alpha/beta chains family. In terms of assembly, F-type ATPases have 2 components, CF(1) - the catalytic core - and CF(0) - the membrane proton channel. CF(1) has five subunits: alpha(3), beta(3), gamma(1), delta(1), epsilon(1). CF(0) has four main subunits: a, b, b' and c.

The protein localises to the plastid. The protein resides in the chloroplast thylakoid membrane. The catalysed reaction is ATP + H2O + 4 H(+)(in) = ADP + phosphate + 5 H(+)(out). Its function is as follows. Produces ATP from ADP in the presence of a proton gradient across the membrane. The alpha chain is a regulatory subunit. This Lepidium virginicum (Virginia pepperweed) protein is ATP synthase subunit alpha, chloroplastic.